A 461-amino-acid polypeptide reads, in one-letter code: Argininosuccinate lyase (461 aa).

It belongs to the lyase 1 family. Argininosuccinate lyase subfamily.

It localises to the cytoplasm. It catalyses the reaction 2-(N(omega)-L-arginino)succinate = fumarate + L-arginine. It functions in the pathway amino-acid biosynthesis; L-arginine biosynthesis; L-arginine from L-ornithine and carbamoyl phosphate: step 3/3. This chain is Argininosuccinate lyase, found in Bacillus subtilis (strain 168).